We begin with the raw amino-acid sequence, 484 residues long: Malonate-semialdehyde dehydrogenase 1 (484 aa).

6 residues coordinate NAD(+): Phe-153, Lys-177, Glu-180, Arg-181, Ser-230, and Thr-252. Residue Cys-285 is the Nucleophile of the active site. Glu-385 serves as a coordination point for NAD(+).

The protein belongs to the aldehyde dehydrogenase family. IolA subfamily. Homotetramer.

The enzyme catalyses 3-oxopropanoate + NAD(+) + CoA + H2O = hydrogencarbonate + acetyl-CoA + NADH + H(+). The catalysed reaction is 2-methyl-3-oxopropanoate + NAD(+) + CoA + H2O = propanoyl-CoA + hydrogencarbonate + NADH + H(+). Its pathway is polyol metabolism; myo-inositol degradation into acetyl-CoA; acetyl-CoA from myo-inositol: step 7/7. Its function is as follows. Catalyzes the oxidation of malonate semialdehyde (MSA) and methylmalonate semialdehyde (MMSA) into acetyl-CoA and propanoyl-CoA, respectively. Is involved in a myo-inositol catabolic pathway. Bicarbonate, and not CO2, is the end-product of the enzymatic reaction. In Geobacillus thermodenitrificans (strain NG80-2), this protein is Malonate-semialdehyde dehydrogenase 1.